A 444-amino-acid chain; its full sequence is Chitinase-like protein Idgf4 (444 aa).

Residues 1-22 (MKLLLILLGALLAVLTIKRTSA) form the signal peptide. The GH18 domain occupies 27-444 (NHLICYYDGT…ILRAIKFKFQ (418 aa)). An intrachain disulfide couples cysteine 31 to cysteine 58. Asparagine 226 carries an N-linked (GlcNAc...) asparagine glycan. Cysteines 345 and 428 form a disulfide.

Belongs to the glycosyl hydrolase 18 family. IDGF subfamily. In terms of processing, glycosylated.

The protein resides in the secreted. Functionally, cooperates with insulin-like peptides to stimulate the proliferation, polarization and motility of imaginal disk cells. May act by stabilizing the binding of insulin-like peptides to its receptor through a simultaneous interaction with both molecules to form a multiprotein signaling complex. This is Chitinase-like protein Idgf4 (Idgf4) from Glossina morsitans morsitans (Savannah tsetse fly).